Consider the following 453-residue polypeptide: Ribose 1,5-bisphosphate phosphokinase PhnN (453 aa).

The interval 1–21 (MHGSTGFVQGTRPAGDQADPL) is disordered. The unknown stretch occupies residues 1–271 (MHGSTGFVQG…SGQGERASLP (271 aa)). Residues 272 to 453 (HSGRIFFCVG…KLLDILRQAK (182 aa)) are ribose 1,5-bisphosphokinase.

The protein in the C-terminal section; belongs to the ribose 1,5-bisphosphokinase family.

It carries out the reaction alpha-D-ribose 1,5-bisphosphate + ATP = 5-phospho-alpha-D-ribose 1-diphosphate + ADP. It participates in metabolic intermediate biosynthesis; 5-phospho-alpha-D-ribose 1-diphosphate biosynthesis; 5-phospho-alpha-D-ribose 1-diphosphate from D-ribose 5-phosphate (route II): step 3/3. Its function is as follows. Catalyzes the phosphorylation of ribose 1,5-bisphosphate to 5-phospho-D-ribosyl alpha-1-diphosphate (PRPP). The polypeptide is Ribose 1,5-bisphosphate phosphokinase PhnN (phnN) (Janthinobacterium sp. (strain Marseille) (Minibacterium massiliensis)).